The sequence spans 275 residues: Protein COFACTOR ASSEMBLY OF COMPLEX C SUBUNIT B CCB2, chloroplastic (275 aa).

The N-terminal 19 residues, M1–R19, are a transit peptide targeting the chloroplast. At A20–R65 the chain is on the stromal side. A helical membrane pass occupies residues W66–I86. Over S87 to S93 the chain is Lumenal. A helical transmembrane segment spans residues E94–L114. Over K115–G275 the chain is Stromal.

The protein resides in the plastid. It is found in the chloroplast thylakoid membrane. Functionally, required for the biogenesis and accumulation of native cytochrome b6 in the thylakoid membrane. Controls the conversion of apocytochrome b6 to holocytochrome b6. Required for covalent binding of the c-type heme to cytochrome b6. In Arabidopsis thaliana (Mouse-ear cress), this protein is Protein COFACTOR ASSEMBLY OF COMPLEX C SUBUNIT B CCB2, chloroplastic.